We begin with the raw amino-acid sequence, 243 residues long: CTD nuclear envelope phosphatase 1 homolog (243 aa).

Residues alanine 11–phenylalanine 27 form a helical membrane-spanning segment. One can recognise an FCP1 homology domain in the interval serine 56 to leucine 223.

It belongs to the dullard family.

Its subcellular location is the membrane. The enzyme catalyses O-phospho-L-seryl-[protein] + H2O = L-seryl-[protein] + phosphate. It catalyses the reaction O-phospho-L-threonyl-[protein] + H2O = L-threonyl-[protein] + phosphate. Functionally, serine/threonine protein phosphatase that may dephosphorylate and activate lipin-like phosphatases. Lipins are phosphatidate phosphatases that catalyze the conversion of phosphatidic acid to diacylglycerol and control the metabolism of fatty acids at different levels. May indirectly modulate the lipid composition of nuclear and/or endoplasmic reticulum membranes and be required for proper nuclear membrane morphology and/or dynamics. May also indirectly regulate the production of lipid droplets and triacylglycerol. The polypeptide is CTD nuclear envelope phosphatase 1 homolog (l(1)G0269) (Drosophila pseudoobscura pseudoobscura (Fruit fly)).